The sequence spans 355 residues: Elongation factor Ts (355 aa).

Residues 82–85 are involved in Mg(2+) ion dislocation from EF-Tu; it reads TDFV.

It belongs to the EF-Ts family.

The protein localises to the cytoplasm. In terms of biological role, associates with the EF-Tu.GDP complex and induces the exchange of GDP to GTP. It remains bound to the aminoacyl-tRNA.EF-Tu.GTP complex up to the GTP hydrolysis stage on the ribosome. In Wolinella succinogenes (strain ATCC 29543 / DSM 1740 / CCUG 13145 / JCM 31913 / LMG 7466 / NCTC 11488 / FDC 602W) (Vibrio succinogenes), this protein is Elongation factor Ts.